A 409-amino-acid polypeptide reads, in one-letter code: Argininosuccinate synthase (409 aa).

ATP contacts are provided by residues 12–20 (AYSGGLDTS) and alanine 39. Positions 90 and 95 each coordinate L-citrulline. Glycine 120 provides a ligand contact to ATP. L-aspartate-binding residues include threonine 122, asparagine 126, and aspartate 127. Asparagine 126 is an L-citrulline binding site. Residues arginine 130, serine 181, serine 190, glutamate 266, and tyrosine 278 each coordinate L-citrulline.

This sequence belongs to the argininosuccinate synthase family. Type 1 subfamily. Homotetramer.

It localises to the cytoplasm. The enzyme catalyses L-citrulline + L-aspartate + ATP = 2-(N(omega)-L-arginino)succinate + AMP + diphosphate + H(+). It functions in the pathway amino-acid biosynthesis; L-arginine biosynthesis; L-arginine from L-ornithine and carbamoyl phosphate: step 2/3. This Acidiphilium cryptum (strain JF-5) protein is Argininosuccinate synthase.